A 149-amino-acid chain; its full sequence is Protein GR6 (149 aa).

In terms of tissue distribution, expressed in fetus (aged from 7 to 8 weeks). Weakly expressed in lymphocytes.

This Homo sapiens (Human) protein is Protein GR6.